A 96-amino-acid chain; its full sequence is Uteroglobin (96 aa).

The N-terminal stretch at 1-21 (MKIAITITVVMLSICCSSASS) is a signal peptide.

This sequence belongs to the secretoglobin family. As to quaternary structure, antiparallel homodimer; disulfide-linked. Interaction with LMBR1L is controversial. In terms of tissue distribution, club cells (nonciliated cells of the surface epithelium of the pulmonary airways).

The protein localises to the secreted. Binds phosphatidylcholine, phosphatidylinositol, polychlorinated biphenyls (PCB) and weakly progesterone, potent inhibitor of phospholipase A2. This chain is Uteroglobin (Scgb1a1), found in Mus musculus (Mouse).